Consider the following 495-residue polypeptide: IQ domain-containing protein IQM5 (495 aa).

Residues 89–122 (ENRGGEEEDERGSSPKRRNRGNLTALSLPAPTPF) form a disordered region. In terms of domain architecture, IQ spans 131-160 (LDAAAVTLQKVYKSYRTRRNLADCAVVVEE).

Expressed in roots, rosette and cauline leaves, and at lower levels in stems, flowers and siliques.

The protein localises to the cytoplasm. It localises to the nucleus. In terms of biological role, may be involved in biotic and abiotic stress responses. The sequence is that of IQ domain-containing protein IQM5 from Arabidopsis thaliana (Mouse-ear cress).